The chain runs to 273 residues: Large ribosomal subunit protein uL2cz/uL2cy (273 aa).

2 disordered regions span residues 1 to 24 (MAIH…QAKS) and 224 to 254 (NPVD…PALG).

Belongs to the universal ribosomal protein uL2 family. As to quaternary structure, part of the 50S ribosomal subunit.

It is found in the plastid. The protein localises to the chloroplast. This Nymphaea alba (White water-lily) protein is Large ribosomal subunit protein uL2cz/uL2cy (rpl2-A).